A 461-amino-acid polypeptide reads, in one-letter code: MRVLIKNGTVVNADGQAKQDLLIESGIVRQLGNNISPQLPYEEIDATGCYVFPGGVDVHTHFNIDVGIARSCDDFFTGTRAAACGGTTTIIDHMGFGPNGCRLRHQLEVYRGYAAHKAVIDYSFHGVIQHINHAILDEIPMMAEEGLSSFKLYLTYQYKLNDDEVLQALRRLHESGALTTVHPENDAAIASKRAEFIAAGLTAPRYHALSRPLECEAEAIARMINLAQIAGNAPLYIVHLSNGLGLDYLRLARANHQPVWVETCPQYLLLDERSYDTEDGMKFILSPPLRNVREQDKLWCGISDGAIDVVATDHCTFSMAQRLQISKGDFSRCPNGLPGVENRMQLLFSSGVMTGRITPERFVELTSAMPARLFGLWPQKGLLAPGSDGDVVIIDPRQSQQIQHRHLHDNADYSPWEGFTCQGAIVRTLSRGETIFCDGTFTGKAGRGRFLRRKPFVPPVL.

The a divalent metal cation site is built by His59, His61, and Lys151. Lys151 carries the post-translational modification N6-carboxylysine. Position 156 (Tyr156) interacts with substrate. A divalent metal cation contacts are provided by His182 and His239. A substrate-binding site is contributed by Ser286. Asp313 serves as a coordination point for a divalent metal cation. Residue Asn335 participates in substrate binding.

The protein belongs to the metallo-dependent hydrolases superfamily. Hydantoinase/dihydropyrimidinase family. In terms of assembly, homotetramer. The cofactor is a divalent metal cation. Carboxylation allows a single lysine to coordinate two divalent metal cations.

The enzyme catalyses D-5-phenylhydantoin + H2O = N-carbamoyl-D-phenylglycine + H(+). In terms of biological role, catalyzes the stereospecific hydrolysis of the cyclic amide bond of D-hydantoin derivatives with an aromatic side chains at the 5'-position. Has no activity on dihydropyrimidines. The physiological function is unknown. The protein is D-phenylhydantoinase of Escherichia coli O9:H4 (strain HS).